Here is a 117-residue protein sequence, read N- to C-terminus: Putative phosphotransferase enzyme IIB component MPN_268 (117 aa).

Residues 1 to 21 (MKVLLWIGYVLSFGLLYLYLV) form a helical membrane-spanning segment. The 76-residue stretch at 42–117 (PFAVRDFIAA…QLKQQIENER (76 aa)) folds into the PTS EIIB type-1 domain.

Its subcellular location is the membrane. Functionally, the phosphoenolpyruvate-dependent sugar phosphotransferase system (PTS), a major carbohydrate active -transport system, catalyzes the phosphorylation of incoming sugar substrates concomitant with their translocation across the cell membrane. The polypeptide is Putative phosphotransferase enzyme IIB component MPN_268 (Mycoplasma pneumoniae (strain ATCC 29342 / M129 / Subtype 1) (Mycoplasmoides pneumoniae)).